The sequence spans 92 residues: Small ribosomal subunit protein bS20 (92 aa).

Residues 1–23 (MANTPSAKKRAKQAEKRRSHNAS) are disordered. A compositionally biased stretch (basic residues) spans 7-20 (AKKRAKQAEKRRSH).

Belongs to the bacterial ribosomal protein bS20 family.

In terms of biological role, binds directly to 16S ribosomal RNA. This is Small ribosomal subunit protein bS20 from Pseudomonas entomophila (strain L48).